The sequence spans 415 residues: MNEVLAKGKKAKEIARELVLKSTEQKNEALSAIADQLILETAYILEENKKDIEEGKAKGFSDSLLDRLMLNEQRIVDMTEGIKQLIELRDPVGDCVSAWERPNGLSIQEMRVPLGVVGMIYEARPNVTVDAATICLKTGNAVILRGSSSAIHSNKAIVAVIHRALKQTSLPQESVQLIEDTTRDSAKQLFTMNDYLDVLIPRGGKQLIDTVVREASVPVLETGAGNCHVFIDETADKQMAFDIIINAKTQRPSVCNAIETIVLHEKWAEQYGSELFSSLKKRGVELRGDQKALAMDSSIVLASEEDWGTEFLSLTLAVKLVSSIEEAIHHINTYGSMHSEAIISENEENVSKFFVSVDAAALYHNASTRFTDGYEFGFGAEIGISTQKLHVRGPMGLPALTSIKYVIRGNGQIRK.

It belongs to the gamma-glutamyl phosphate reductase family.

The protein resides in the cytoplasm. It catalyses the reaction L-glutamate 5-semialdehyde + phosphate + NADP(+) = L-glutamyl 5-phosphate + NADPH + H(+). It participates in amino-acid biosynthesis; L-proline biosynthesis; L-glutamate 5-semialdehyde from L-glutamate: step 2/2. Functionally, catalyzes the NADPH-dependent reduction of L-glutamate 5-phosphate into L-glutamate 5-semialdehyde and phosphate. The product spontaneously undergoes cyclization to form 1-pyrroline-5-carboxylate. The polypeptide is Gamma-glutamyl phosphate reductase (Bacillus cereus (strain ZK / E33L)).